The sequence spans 254 residues: C-X-C motif chemokine 16 (254 aa).

The N-terminal stretch at 1–29 is a signal peptide; that stretch reads MGRDLRPGSRVLLLLLLLLLVYLTQPGNG. Topologically, residues 30–205 are extracellular; it reads NEGSVTGSCY…AGPTARTSAT (176 aa). The tract at residues 32-107 is chemokine; sequence GSVTGSCYCG…DLKECGHAYS (76 aa). 2 disulfide bridges follow: Cys38-Cys68 and Cys40-Cys82. The interval 146–165 is disordered; the sequence is QSTQRPTLPVGSLSSDKELT. Asn168 carries an N-linked (GlcNAc...) asparagine glycan. The interval 178-200 is disordered; that stretch reads SLAAGPEAGENQKQPEKNAGPTA. The chain crosses the membrane as a helical span at residues 206–226; that stretch reads VPVLCLLAIIFILTAALSYVL. Over 227–254 the chain is Cytoplasmic; that stretch reads CKRRRGQSPQSSPDLPVHYIPVAPDSNT. The segment at 231–254 is disordered; sequence RGQSPQSSPDLPVHYIPVAPDSNT.

Belongs to the intercrine alpha (chemokine CxC) family. In terms of processing, glycosylated. Expressed in T-cell areas. Expressed in spleen, lymph nodes, lung, kidney, small intestine and thymus. Weak expression in heart and liver and no expression in brain and bone marrow.

The protein resides in the cell membrane. It is found in the secreted. Its function is as follows. Acts as a scavenger receptor on macrophages, which specifically binds to OxLDL (oxidized low density lipoprotein), suggesting that it may be involved in pathophysiology such as atherogenesis. Induces a strong chemotactic response. Induces calcium mobilization. Binds to CXCR6/Bonzo. This Homo sapiens (Human) protein is C-X-C motif chemokine 16 (CXCL16).